The following is a 30-amino-acid chain: Putative alpha-amylase inhibitor (30 aa).

Belongs to the leguminous lectin family.

In terms of biological role, lectin and alpha-amylase inhibitor. Acts as a defensive protein against insects. In Phaseolus vulgaris (Kidney bean), this protein is Putative alpha-amylase inhibitor.